The primary structure comprises 386 residues: Succinate--CoA ligase [ADP-forming] subunit beta (386 aa).

Positions 9 to 244 (KELFANYGVP…LDEEEPLEVE (236 aa)) constitute an ATP-grasp domain. ATP-binding positions include lysine 46, 53–55 (GRG), glutamate 99, leucine 102, and glutamate 107. Residues asparagine 199 and aspartate 213 each coordinate Mg(2+). Residues asparagine 264 and 321-323 (GIL) contribute to the substrate site.

It belongs to the succinate/malate CoA ligase beta subunit family. As to quaternary structure, heterotetramer of two alpha and two beta subunits. Mg(2+) serves as cofactor.

The enzyme catalyses succinate + ATP + CoA = succinyl-CoA + ADP + phosphate. It carries out the reaction GTP + succinate + CoA = succinyl-CoA + GDP + phosphate. Its pathway is carbohydrate metabolism; tricarboxylic acid cycle; succinate from succinyl-CoA (ligase route): step 1/1. Functionally, succinyl-CoA synthetase functions in the citric acid cycle (TCA), coupling the hydrolysis of succinyl-CoA to the synthesis of either ATP or GTP and thus represents the only step of substrate-level phosphorylation in the TCA. The beta subunit provides nucleotide specificity of the enzyme and binds the substrate succinate, while the binding sites for coenzyme A and phosphate are found in the alpha subunit. The sequence is that of Succinate--CoA ligase [ADP-forming] subunit beta from Desulfatibacillum aliphaticivorans.